Here is a 626-residue protein sequence, read N- to C-terminus: Carnitine O-acetyltransferase (626 aa).

Position 93 is an N6-succinyllysine (Lys-93). At Lys-261 the chain carries N6-acetyllysine; alternate. Lys-261 is subject to N6-succinyllysine; alternate. The residue at position 268 (Lys-268) is an N6-acetyllysine. Catalysis depends on His-343, which acts as the Proton acceptor. CoA-binding positions include Lys-419 and 423-430 (KSEKLSPD). 2 residues coordinate (R)-carnitine: Tyr-452 and Ser-454. Ser-456 is a CoA binding site. Thr-465 contacts (R)-carnitine. CoA contacts are provided by Arg-504 and Gln-555. A Microbody targeting signal motif is present at residues 624 to 626 (AKL).

Belongs to the carnitine/choline acetyltransferase family. In terms of assembly, monomer.

It is found in the endoplasmic reticulum. The protein resides in the peroxisome. Its subcellular location is the mitochondrion inner membrane. The catalysed reaction is (R)-carnitine + acetyl-CoA = O-acetyl-(R)-carnitine + CoA. It catalyses the reaction propanoyl-CoA + (R)-carnitine = O-propanoyl-(R)-carnitine + CoA. The enzyme catalyses butanoyl-CoA + (R)-carnitine = O-butanoyl-(R)-carnitine + CoA. It carries out the reaction hexanoyl-CoA + (R)-carnitine = O-hexanoyl-(R)-carnitine + CoA. The catalysed reaction is octanoyl-CoA + (R)-carnitine = O-octanoyl-(R)-carnitine + CoA. It catalyses the reaction decanoyl-CoA + (R)-carnitine = O-decanoyl-(R)-carnitine + CoA. The enzyme catalyses 3-methylbutanoyl-CoA + (R)-carnitine = O-3-methylbutanoyl-(R)-carnitine + CoA. It carries out the reaction 2-methylpropanoyl-CoA + (R)-carnitine = O-isobutanoyl-(R)-carnitine + CoA. The catalysed reaction is 2-methylbutanoyl-CoA + (R)-carnitine = O-2-methylbutanoyl-(R)-carnitine + CoA. It catalyses the reaction acetoacetyl-CoA + (R)-carnitine = O-3-oxobutanoyl-(R)-carnitine + CoA. The enzyme catalyses 3-hydroxybutanoyl-CoA + (R)-carnitine = O-3-hydroxybutanoyl-(R)-carnitine + CoA. It carries out the reaction 4,8-dimethylnonanoyl-CoA + (R)-carnitine = O-4,8-dimethylnonanoyl-(R)-carnitine + CoA. The catalysed reaction is 2,6-dimethylheptanoyl-CoA + (R)-carnitine = O-2,6-dimethylheptanoyl-(R)-carnitine + CoA. Functionally, catalyzes the reversible transfer of acyl groups from carnitine to coenzyme A (CoA) and regulates the acyl-CoA/CoA ratio. Also plays a crucial role in the transport of fatty acids for beta-oxidation. Responsible for the synthesis of short- and branched-chain acylcarnitines. Active towards some branched-chain amino acid oxidation pathway (BCAAO) intermediates. Trans-2-enoyl-CoAs and 2-methylacyl-CoAs are poor substrates. The protein is Carnitine O-acetyltransferase of Mus musculus (Mouse).